Reading from the N-terminus, the 184-residue chain is Translation initiation factor IF-3 (184 aa).

It belongs to the IF-3 family. Monomer.

The protein resides in the cytoplasm. Functionally, IF-3 binds to the 30S ribosomal subunit and shifts the equilibrium between 70S ribosomes and their 50S and 30S subunits in favor of the free subunits, thus enhancing the availability of 30S subunits on which protein synthesis initiation begins. The polypeptide is Translation initiation factor IF-3 (Hamiltonella defensa subsp. Acyrthosiphon pisum (strain 5AT)).